We begin with the raw amino-acid sequence, 1359 residues long: DNA-directed RNA polymerase subunit beta (1359 aa).

It belongs to the RNA polymerase beta chain family. The RNAP catalytic core consists of 2 alpha, 1 beta, 1 beta' and 1 omega subunit. When a sigma factor is associated with the core the holoenzyme is formed, which can initiate transcription.

It carries out the reaction RNA(n) + a ribonucleoside 5'-triphosphate = RNA(n+1) + diphosphate. Its function is as follows. DNA-dependent RNA polymerase catalyzes the transcription of DNA into RNA using the four ribonucleoside triphosphates as substrates. The protein is DNA-directed RNA polymerase subunit beta of Nitrosomonas eutropha (strain DSM 101675 / C91 / Nm57).